A 258-amino-acid polypeptide reads, in one-letter code: Phycoerythrobilin:ferredoxin oxidoreductase (258 aa).

This sequence belongs to the HY2 family.

It catalyses the reaction (3Z)-phycoerythrobilin + oxidized 2[4Fe-4S]-[ferredoxin] = 15,16-dihydrobiliverdin + reduced 2[4Fe-4S]-[ferredoxin] + 2 H(+). Functionally, catalyzes the two-electron reduction of the C2 and C3(1) diene system of 15,16-dihydrobiliverdin. In Prochlorococcus marinus (strain NATL1A), this protein is Phycoerythrobilin:ferredoxin oxidoreductase.